The following is a 103-amino-acid chain: Large ribosomal subunit protein eL21 (103 aa).

Belongs to the eukaryotic ribosomal protein eL21 family.

The protein is Large ribosomal subunit protein eL21 of Sulfurisphaera tokodaii (strain DSM 16993 / JCM 10545 / NBRC 100140 / 7) (Sulfolobus tokodaii).